A 479-amino-acid chain; its full sequence is Glutamate--tRNA ligase (479 aa).

A 'HIGH' region motif is present at residues 21-31 (PSPTGYLHVGG). Positions 248 to 252 (KLSKR) match the 'KMSKS' region motif. An ATP-binding site is contributed by Lys251.

This sequence belongs to the class-I aminoacyl-tRNA synthetase family. Glutamate--tRNA ligase type 1 subfamily. Monomer.

The protein resides in the cytoplasm. It catalyses the reaction tRNA(Glu) + L-glutamate + ATP = L-glutamyl-tRNA(Glu) + AMP + diphosphate. Its function is as follows. Catalyzes the attachment of glutamate to tRNA(Glu) in a two-step reaction: glutamate is first activated by ATP to form Glu-AMP and then transferred to the acceptor end of tRNA(Glu). This is Glutamate--tRNA ligase from Actinobacillus pleuropneumoniae serotype 5b (strain L20).